Consider the following 496-residue polypeptide: Alanine aminotransferase 1 (496 aa).

Alanine 2 carries the post-translational modification N-acetylalanine. The residue at position 22 (threonine 22) is a Phosphothreonine. At lysine 314 the chain carries N6-(pyridoxal phosphate)lysine.

The protein belongs to the class-I pyridoxal-phosphate-dependent aminotransferase family. Alanine aminotransferase subfamily. In terms of assembly, homodimer. Requires pyridoxal 5'-phosphate as cofactor. In terms of tissue distribution, mainly expressed in liver, intestine, colon and white adipose tissue.

It is found in the cytoplasm. It carries out the reaction L-alanine + 2-oxoglutarate = pyruvate + L-glutamate. It participates in amino-acid degradation; L-alanine degradation via transaminase pathway; pyruvate from L-alanine: step 1/1. Functionally, catalyzes the reversible transamination between alanine and 2-oxoglutarate to form pyruvate and glutamate. Participates in cellular nitrogen metabolism and also in liver gluconeogenesis starting with precursors transported from skeletal muscles. This chain is Alanine aminotransferase 1 (Gpt), found in Mus musculus (Mouse).